We begin with the raw amino-acid sequence, 776 residues long: G protein-regulated inducer of neurite outgrowth 3 (776 aa).

Disordered stretches follow at residues 1-37 (MGTVPDPLRSAKTSLIAASGKEDDLGEPQAASPRHRP) and 68-312 (VCEH…IKEV). Residues 101 to 118 (QLPGSSQPAASAPSSAAG) show a composition bias toward low complexity. Composition is skewed to polar residues over residues 129–161 (PANQHTCQSIPGDQPNAITSSMPEDSLMRSQRT) and 193–203 (ETIQGTVQTPV). Residues 208–217 (VVSHSSSPVG) are compositionally biased toward low complexity. Residues 242–274 (SGCSENKQPSVTASGPQGTTSVTPQPTPLTSEP) show a composition bias toward polar residues. Phosphoserine is present on residues serine 332 and serine 365. Disordered regions lie at residues 518-637 (ISKA…RPSR) and 723-748 (LIKTQNSQTRRSISSDTSSNKKLRGR). The span at 520-552 (KADHSGSLDPTNKGDAREKKPASPQVVKEKEST) shows a compositional bias: basic and acidic residues. Polar residues predominate over residues 566–580 (PKSQESGGTESAANP). The segment covering 604–620 (SLSLPSDPMGDSSPGSG) has biased composition (low complexity). Polar residues predominate over residues 725–742 (KTQNSQTRRSISSDTSSN).

Its function is as follows. May be involved in neurite outgrowth. This chain is G protein-regulated inducer of neurite outgrowth 3 (GPRIN3), found in Homo sapiens (Human).